Reading from the N-terminus, the 217-residue chain is Glycosylphosphatidylinositol anchor biosynthesis protein 11 (217 aa).

Helical transmembrane passes span 45–65 (TWLT…KVFN) and 68–88 (NTAE…IFQF). Residue N102 is glycosylated (N-linked (GlcNAc...) asparagine). 4 consecutive transmembrane segments (helical) span residues 107–127 (AISI…IILF), 134–154 (LLWE…PAVY), 169–189 (YFIL…LDWD), and 197–217 (IPIV…GAYL).

It belongs to the PIGF family.

Its subcellular location is the endoplasmic reticulum membrane. The protein operates within glycolipid biosynthesis; glycosylphosphatidylinositol-anchor biosynthesis. Its function is as follows. Acts in the GPI biosynthetic pathway between GlcNAc-PI synthesis and GPI transfer to protein. The sequence is that of Glycosylphosphatidylinositol anchor biosynthesis protein 11 (GPI11) from Candida glabrata (strain ATCC 2001 / BCRC 20586 / JCM 3761 / NBRC 0622 / NRRL Y-65 / CBS 138) (Yeast).